The chain runs to 176 residues: Ribosome rescue factor SmrB (176 aa).

In terms of domain architecture, Smr spans 97–172 (LDMHGMTQQE…GDGALLVLLS (76 aa)).

Belongs to the SmrB family. Associates with collided ribosomes, but not with correctly translating polysomes.

In terms of biological role, acts as a ribosome collision sensor. Detects stalled/collided disomes (pairs of ribosomes where the leading ribosome is stalled and a second ribosome has collided with it) and endonucleolytically cleaves mRNA at the 5' boundary of the stalled ribosome. Stalled/collided disomes form a new interface (primarily via the 30S subunits) that binds SmrB. Cleaved mRNA becomes available for tmRNA ligation, leading to ribosomal subunit dissociation and rescue of stalled ribosomes. This chain is Ribosome rescue factor SmrB, found in Vibrio vulnificus (strain CMCP6).